The chain runs to 98 residues: NADH-ubiquinone oxidoreductase chain 4L (98 aa).

3 helical membrane-spanning segments follow: residues 1-21 (MIPT…GMLI), 29-49 (SLLC…LIAL), and 61-81 (IILL…LVSI).

The protein belongs to the complex I subunit 4L family. As to quaternary structure, core subunit of respiratory chain NADH dehydrogenase (Complex I) which is composed of 45 different subunits.

The protein resides in the mitochondrion inner membrane. The catalysed reaction is a ubiquinone + NADH + 5 H(+)(in) = a ubiquinol + NAD(+) + 4 H(+)(out). Functionally, core subunit of the mitochondrial membrane respiratory chain NADH dehydrogenase (Complex I) which catalyzes electron transfer from NADH through the respiratory chain, using ubiquinone as an electron acceptor. Part of the enzyme membrane arm which is embedded in the lipid bilayer and involved in proton translocation. This Macaca ochreata (Booted macaque) protein is NADH-ubiquinone oxidoreductase chain 4L (MT-ND4L).